Consider the following 299-residue polypeptide: ATP phosphoribosyltransferase (299 aa).

It belongs to the ATP phosphoribosyltransferase family. Long subfamily. Mg(2+) is required as a cofactor.

Its subcellular location is the cytoplasm. The catalysed reaction is 1-(5-phospho-beta-D-ribosyl)-ATP + diphosphate = 5-phospho-alpha-D-ribose 1-diphosphate + ATP. It participates in amino-acid biosynthesis; L-histidine biosynthesis; L-histidine from 5-phospho-alpha-D-ribose 1-diphosphate: step 1/9. With respect to regulation, feedback inhibited by histidine. In terms of biological role, catalyzes the condensation of ATP and 5-phosphoribose 1-diphosphate to form N'-(5'-phosphoribosyl)-ATP (PR-ATP). Has a crucial role in the pathway because the rate of histidine biosynthesis seems to be controlled primarily by regulation of HisG enzymatic activity. This is ATP phosphoribosyltransferase from Shewanella frigidimarina (strain NCIMB 400).